We begin with the raw amino-acid sequence, 79 residues long: Large ribosomal subunit protein bL31 (79 aa).

This sequence belongs to the bacterial ribosomal protein bL31 family. Type A subfamily. In terms of assembly, part of the 50S ribosomal subunit.

Functionally, binds the 23S rRNA. This Rickettsia bellii (strain RML369-C) protein is Large ribosomal subunit protein bL31 (rpmE).